Here is a 471-residue protein sequence, read N- to C-terminus: Acetylcholinesterase collagenic tail peptide (471 aa).

An N-terminal signal peptide occupies residues 1–30 (MLGILLQKATATLASGLNSSRAGMFPIALG). The interval 70-86 (CCLLTPPPPPMFPPPFF) is PRAD. Collagen-like domains lie at 118-282 (GPPG…SGLP) and 293-307 (GPKG…VGRC). Disordered regions lie at residues 140–205 (EIGE…GEKG) and 237–267 (KGVS…IGPP). 2 stretches are compositionally biased toward low complexity: residues 155–164 (VRGPRGMPGS) and 242–251 (APGHRGPVGR). 2 repeat units span residues 388-413 (FCGD…TDSC) and 420-443 (YCGD…YHTC). The tract at residues 388–443 (FCGDEIVQVENGEECDDGNRIVTDSCINCKQAYCGDGYLQSGLEECDGKDFGYHTC) is 2 X 26 AA approximate repeats.

It belongs to the COLQ family. The asymmetric form of AChE is a disulfide-bonded oligomer composed of a collagenic subunit (Q) and a variable number of asymmetric (T) catalytic subunits. The N-terminal of the collagenic subunit (Q) associates with the C-terminal of the catalytic subunit (T). In terms of tissue distribution, expressed in electric organs but not in muscle.

The protein localises to the synapse. Anchors the catalytic subunits of asymmetric AChE to the synaptic basal lamina. The chain is Acetylcholinesterase collagenic tail peptide from Torpedo marmorata (Marbled electric ray).